A 99-amino-acid polypeptide reads, in one-letter code: Putative type 4B encapsulin shell protein PF1875 (99 aa).

The protein belongs to the encapsulin family. Family 4B subfamily. As to quaternary structure, may self-assemble into facets and potentially into larger complexes.

It is found in the encapsulin nanocompartment. Its function is as follows. May be the encapsulin shell protein in a type 4 A-domain encapsulin nanocompartment system. Its cargo may be upstream glyceraldehyde-3-phosphate dehydrogenase (AC P61879). The chain is Putative type 4B encapsulin shell protein PF1875 from Pyrococcus furiosus (strain ATCC 43587 / DSM 3638 / JCM 8422 / Vc1).